We begin with the raw amino-acid sequence, 316 residues long: Transaldolase (316 aa).

Catalysis depends on lysine 132, which acts as the Schiff-base intermediate with substrate.

The protein belongs to the transaldolase family. Type 1 subfamily. As to quaternary structure, homodimer.

It is found in the cytoplasm. The catalysed reaction is D-sedoheptulose 7-phosphate + D-glyceraldehyde 3-phosphate = D-erythrose 4-phosphate + beta-D-fructose 6-phosphate. It participates in carbohydrate degradation; pentose phosphate pathway; D-glyceraldehyde 3-phosphate and beta-D-fructose 6-phosphate from D-ribose 5-phosphate and D-xylulose 5-phosphate (non-oxidative stage): step 2/3. Transaldolase is important for the balance of metabolites in the pentose-phosphate pathway. The sequence is that of Transaldolase from Aliivibrio fischeri (strain ATCC 700601 / ES114) (Vibrio fischeri).